The chain runs to 403 residues: D-mannonate dehydratase (403 aa).

Residues asparagine 38 and histidine 123 each coordinate substrate. Tyrosine 160 serves as the catalytic Proton donor/acceptor. Aspartate 211 contacts Mg(2+). The active-site Proton donor/acceptor is the histidine 213. Mg(2+) is bound by residues glutamate 237 and glutamate 263. Glutamate 263, arginine 284, histidine 313, aspartate 317, and glutamate 340 together coordinate substrate.

This sequence belongs to the mandelate racemase/muconate lactonizing enzyme family. GalD subfamily. Requires Mg(2+) as cofactor.

It carries out the reaction D-mannonate = 2-dehydro-3-deoxy-D-gluconate + H2O. Its pathway is carbohydrate metabolism; pentose and glucuronate interconversion. Catalyzes the dehydration of D-mannonate. Has no detectable activity with a panel of 70 other acid sugars (in vitro). This is D-mannonate dehydratase from Sphingomonas sp. (strain SKA58).